A 636-amino-acid polypeptide reads, in one-letter code: Molybdenum cofactor biosynthesis protein 1 (636 aa).

Residues 1–383 (MAARPAFGIV…QMKNRPMILI (383 aa)) form a molybdenum cofactor biosynthesis protein A region. Residues 19-40 (RGCSSGAPVTQPRPGEPSRPTR) are disordered. At serine 64 the chain carries Phosphoserine. Positions 64–279 (SFGRQHSYLR…TIRQRWPGLE (216 aa)) constitute a Radical SAM core domain. Arginine 73 provides a ligand contact to GTP. 2 residues coordinate [4Fe-4S] cluster: cysteine 80 and cysteine 84. Tyrosine 86 lines the S-adenosyl-L-methionine pocket. [4Fe-4S] cluster is bound at residue cysteine 87. Arginine 123 provides a ligand contact to GTP. Residue glycine 127 coordinates S-adenosyl-L-methionine. A GTP-binding site is contributed by threonine 154. An S-adenosyl-L-methionine-binding site is contributed by serine 178. At lysine 198 the chain carries N6-acetyllysine. A GTP-binding site is contributed by lysine 215. Methionine 249 contacts S-adenosyl-L-methionine. Positions 312 and 315 each coordinate [4Fe-4S] cluster. 317–319 (RLR) is a GTP binding site. Cysteine 329 provides a ligand contact to [4Fe-4S] cluster. The segment at 414–636 (QCLSDQMASL…GGQRGDFHRA (223 aa)) is molybdenum cofactor biosynthesis protein C. The segment at 444 to 484 (SPQRHYSSYPDPDTHSKCLSTGSQAPDAPSGPGPTSNQLTH) is disordered. Position 528 is an N6-acetyllysine (lysine 528). Aspartate 606 serves as the catalytic For molybdenum cofactor biosynthesis protein C activity.

This sequence in the C-terminal section; belongs to the MoaC family. It in the N-terminal section; belongs to the radical SAM superfamily. MoaA family. In terms of assembly, isoform Mocs1a and isoform Mocs1b probably form a heterooligomer. Requires [4Fe-4S] cluster as cofactor.

The catalysed reaction is GTP + AH2 + S-adenosyl-L-methionine = (8S)-3',8-cyclo-7,8-dihydroguanosine 5'-triphosphate + 5'-deoxyadenosine + L-methionine + A + H(+). The enzyme catalyses (8S)-3',8-cyclo-7,8-dihydroguanosine 5'-triphosphate = cyclic pyranopterin phosphate + diphosphate. Its pathway is cofactor biosynthesis; molybdopterin biosynthesis. Its function is as follows. Isoform Mocs1a and isoform Mocs1b probably form a complex that catalyzes the conversion of 5'-GTP to cyclic pyranopterin monophosphate (cPMP). Mocs1a catalyzes the cyclization of GTP to (8S)-3',8-cyclo-7,8-dihydroguanosine 5'-triphosphate and Mocs1b catalyzes the subsequent conversion of (8S)-3',8-cyclo-7,8-dihydroguanosine 5'-triphosphate to cPMP. This is Molybdenum cofactor biosynthesis protein 1 (Mocs1) from Mus musculus (Mouse).